A 133-amino-acid chain; its full sequence is Probable mitochondrial pyruvate carrier 2 (133 aa).

The next 3 helical transmembrane spans lie at 40 to 57 (VFFW…AGLA), 73 to 91 (ALFA…ITPI), and 100 to 116 (FFVM…IAHY).

Belongs to the mitochondrial pyruvate carrier (MPC) (TC 2.A.105) family.

The protein resides in the mitochondrion inner membrane. In terms of biological role, may mediate the uptake of pyruvate into mitochondria. In Caenorhabditis elegans, this protein is Probable mitochondrial pyruvate carrier 2.